Here is a 414-residue protein sequence, read N- to C-terminus: 2,3-diketo-5-methylthiopentyl-1-phosphate enolase (414 aa).

Lys99 acts as the Proton acceptor in catalysis. Residues Lys148, 174–177 (KDDE), His265, Gly338, and 360–361 (GG) contribute to the substrate site. Mg(2+) is bound by residues Lys174, Asp176, and Glu177. The residue at position 174 (Lys174) is an N6-carboxylysine.

The protein belongs to the RuBisCO large chain family. Type IV subfamily. Homodimer. Mg(2+) serves as cofactor.

It catalyses the reaction 5-methylsulfanyl-2,3-dioxopentyl phosphate = 2-hydroxy-5-methylsulfanyl-3-oxopent-1-enyl phosphate. It functions in the pathway amino-acid biosynthesis; L-methionine biosynthesis via salvage pathway; L-methionine from S-methyl-5-thio-alpha-D-ribose 1-phosphate: step 3/6. In terms of biological role, catalyzes the enolization of 2,3-diketo-5-methylthiopentyl-1-phosphate (DK-MTP-1-P) into 2-hydroxy-3-keto-5-methylthiopentenyl-1-phosphate (HK-MTPenyl-1-P). The sequence is that of 2,3-diketo-5-methylthiopentyl-1-phosphate enolase from Bacillus cereus (strain G9842).